The chain runs to 317 residues: Putative AP2/ERF and B3 domain-containing protein Os01g0140700 (317 aa).

The segment at 1 to 37 is disordered; it reads MEQEAAMVVFSCNSGSGGSSSTTDSKQEEEEEEELAA. Over residues 27–37 the composition is skewed to acidic residues; that stretch reads QEEEEEEELAA. Positions 66 to 121 form a DNA-binding region, AP2/ERF; the sequence is RYKGVVPQPNGRWGAQIYERHARVWLGTFPDEEAAARAYDVAALRFRGRDAVTNRA. The TF-B3 DNA-binding region spans 178–287; it reads FEKAVTPSDV…EKHLLIDCKK (110 aa).

The protein localises to the nucleus. The protein is Putative AP2/ERF and B3 domain-containing protein Os01g0140700 of Oryza sativa subsp. japonica (Rice).